Consider the following 424-residue polypeptide: Inhibin beta A chain (424 aa).

Residues 1-20 (MPLLWLRGFLLASCWIIVRS) form the signal peptide. Positions 21-308 (SPTPGSEGHG…EDHPHRRRRR (288 aa)) are excised as a propeptide. The N-linked (GlcNAc...) asparagine glycan is linked to Asn165. A compositionally biased stretch (basic and acidic residues) spans 264-275 (EVDGDGKKKDGS). The tract at residues 264-306 (EVDGDGKKKDGSDGGLEEEKEQSHRPFLMLQARQSEDHPHRRR) is disordered. 4 disulfide bridges follow: Cys312/Cys320, Cys319/Cys389, Cys348/Cys421, and Cys352/Cys423.

Belongs to the TGF-beta family. As to quaternary structure, dimeric, linked by one or more disulfide bonds. Inhibin A is a dimer of alpha/INHA and beta-A/INHBA. Activin A is a homodimer of beta-A/INHBA. Activin AB is a dimer of beta-A/INHBA and beta-B/INHBB. Interacts with FST and FSTL3; these interactions prevent activin A interaction to its type II receptor. Activin A interacts with ACVR2A. Activin A interacts with BMPR2. Inhibin A interacts with ACVR1; this interaction creates a non-signaling complex (NSC) that inhibits ACVR1-mediated BMP signaling. Inhibin A interacts with ACVR2A.

The protein resides in the secreted. In terms of biological role, inhibins/activins are involved in regulating a number of diverse functions such as hypothalamic and pituitary hormone secretion, gonadal hormone secretion, germ cell development and maturation, erythroid differentiation, insulin secretion, nerve cell survival, embryonic axial development or bone growth, depending on their subunit composition. Functionally, activin A is a homodimer of INHBA that plays a role in several essential biological processes including embryonic development, stem cell maintenance and differentiation, haematopoiesis, cell proliferation and tissue fibrosis. Signals through type I (such as ACVR1B or ACVR1C) and type II receptors (such as ACVR2A, ACVR2B or BMPR2) which, upon ligand binding, phosphorylate SMAD2 and SMAD3 intracellular signaling mediators that form a complex with SMAD4, translocate to the nucleus and modulate gene expression. Can also activate alternative non-canonical intracellular signaling pathways including the p38 MAPK, extracellular signal-regulated kinases 1/2 (ERK1/2) and c-Jun N-terminal kinases (JNKs) to modulate cell migration and differentiation. Alternatively, promotes osteoblastic differentiation via ACVRL1-SMAD1/5/9 pathway. In addition, can engage the type I receptor ACVR1 to form an ACVR1-activin A-type II receptor non-signaling complex (NSC) that renders receptors unavailable for engagement with BMPs, hence resulting in an apparent inhibition of ACVR1-mediated BMP signaling. Its function is as follows. Inhibin A is a dimer of alpha/INHA and beta-A/INHBA that functions as a feedback regulator in the hypothalamic-pituitary-gonadal (HPG) axis. Inhibits the secretion of FSH from the anterior pituitary gland by acting on pituitary gonadotrope cells. Antagonizes activin A by binding to the proteoglycan, betaglycan, and forming a stable complex with and, thereby, sequestering type II activin receptors while excluding type I receptor. The protein is Inhibin beta A chain (Inhba) of Rattus norvegicus (Rat).